We begin with the raw amino-acid sequence, 328 residues long: Probable transcription factor At4g00610 (328 aa).

Residues 31–143 form a disordered region; the sequence is AKNKTLVTPS…ERAKTETETG (113 aa). Residues 35–54 are compositionally biased toward polar residues; sequence TLVTPSTVKKSSDVASTSKK. The segment covering 84-108 has biased composition (acidic residues); sequence SEEEEEDEPSSDSESGSESESDTEA. The span at 122–143 shows a compositional bias: basic and acidic residues; it reads NEKRQSEGKPEEERAKTETETG.

This sequence belongs to the GeBP family.

In Arabidopsis thaliana (Mouse-ear cress), this protein is Probable transcription factor At4g00610.